The following is a 425-amino-acid chain: Histone-binding protein RBBP7 (425 aa).

WD repeat units lie at residues 47-122 (QWLP…KINH), 128-173 (RARY…LRLR), 181-217 (GLSW…KVVD), 228-269 (VVED…HSVD), 275-312 (VNCL…LHSF), 318-369 (EIFQ…LFIH), and 376-403 (ISDF…IWQM).

It belongs to the WD repeat RBAP46/RBAP48/MSI1 family. In terms of assembly, binds directly to helix 1 of the histone fold of histone H4, a region that is not accessible when H4 is in chromatin.

It localises to the nucleus. Functionally, core histone-binding subunit that may target chromatin remodeling factors, histone acetyltransferases and histone deacetylases to their histone substrates in a manner that is regulated by nucleosomal DNA. Component of several complexes which regulate chromatin metabolism. This is Histone-binding protein RBBP7 (rbbp7) from Xenopus laevis (African clawed frog).